We begin with the raw amino-acid sequence, 705 residues long: Elongation factor G (705 aa).

The tr-type G domain occupies 7-287 (HLTRNIGIMA…YVCAFLPSPL (281 aa)). GTP is bound by residues 16–23 (AHIDAGKT), 84–88 (DTPGH), and 138–141 (NKMD).

It belongs to the TRAFAC class translation factor GTPase superfamily. Classic translation factor GTPase family. EF-G/EF-2 subfamily.

It localises to the cytoplasm. Catalyzes the GTP-dependent ribosomal translocation step during translation elongation. During this step, the ribosome changes from the pre-translocational (PRE) to the post-translocational (POST) state as the newly formed A-site-bound peptidyl-tRNA and P-site-bound deacylated tRNA move to the P and E sites, respectively. Catalyzes the coordinated movement of the two tRNA molecules, the mRNA and conformational changes in the ribosome. This Bacteroides thetaiotaomicron (strain ATCC 29148 / DSM 2079 / JCM 5827 / CCUG 10774 / NCTC 10582 / VPI-5482 / E50) protein is Elongation factor G.